The following is a 75-amino-acid chain: UPF0352 protein PMI0824 (75 aa).

It belongs to the UPF0352 family.

The polypeptide is UPF0352 protein PMI0824 (Proteus mirabilis (strain HI4320)).